Here is a 159-residue protein sequence, read N- to C-terminus: Cyclic pyranopterin monophosphate synthase (159 aa).

Substrate is bound by residues 75–77 (LCH) and 113–114 (ME). Asp-128 is an active-site residue.

Belongs to the MoaC family. Homohexamer; trimer of dimers.

It catalyses the reaction (8S)-3',8-cyclo-7,8-dihydroguanosine 5'-triphosphate = cyclic pyranopterin phosphate + diphosphate. Its pathway is cofactor biosynthesis; molybdopterin biosynthesis. Catalyzes the conversion of (8S)-3',8-cyclo-7,8-dihydroguanosine 5'-triphosphate to cyclic pyranopterin monophosphate (cPMP). The protein is Cyclic pyranopterin monophosphate synthase of Cupriavidus metallidurans (strain ATCC 43123 / DSM 2839 / NBRC 102507 / CH34) (Ralstonia metallidurans).